A 69-amino-acid chain; its full sequence is Neurotoxin Cex7 (69 aa).

Residue alanine 1 is a signal peptide. An LCN-type CS-alpha/beta domain is found at 2–67 (REGYLVSKST…TYPIPGKSCG (66 aa)). 4 cysteine pairs are disulfide-bonded: cysteine 13/cysteine 66, cysteine 17/cysteine 42, cysteine 26/cysteine 47, and cysteine 30/cysteine 49. Cysteine 66 is subject to Cysteine amide. The propeptide occupies 67-69 (GKK).

Belongs to the long (4 C-C) scorpion toxin superfamily. Sodium channel inhibitor family. Beta subfamily. In terms of tissue distribution, expressed by the venom gland.

It is found in the secreted. Beta toxins bind voltage-independently at site-4 of sodium channels (Nav) and shift the voltage of activation toward more negative potentials thereby affecting sodium channel activation and promoting spontaneous and repetitive firing. The sequence is that of Neurotoxin Cex7 from Centruroides exilicauda (Bark scorpion).